The sequence spans 287 residues: ATP synthase gamma chain (287 aa).

The protein belongs to the ATPase gamma chain family. In terms of assembly, F-type ATPases have 2 components, CF(1) - the catalytic core - and CF(0) - the membrane proton channel. CF(1) has five subunits: alpha(3), beta(3), gamma(1), delta(1), epsilon(1). CF(0) has three main subunits: a, b and c. The F(1)F(0) complex interacts with SpoIIIJ and YqjG; YqgA is found in the same complex. Interacts with FloT.

It localises to the cell membrane. It is found in the membrane raft. In terms of biological role, produces ATP from ADP in the presence of a proton gradient across the membrane. The gamma chain is believed to be important in regulating ATPase activity and the flow of protons through the CF(0) complex. The chain is ATP synthase gamma chain from Bacillus subtilis (strain 168).